We begin with the raw amino-acid sequence, 213 residues long: Transmembrane protein 186 (213 aa).

The Mitochondrial matrix portion of the chain corresponds to 1 to 79 (MAALLRAVRR…FLSRLKLAQT (79 aa)). The helical transmembrane segment at 80-100 (ALTVVALPPGYYLYSQGLLTL) threads the bilayer. At 101–102 (NT) the chain is on the mitochondrial intermembrane side. Residues 103 to 123 (VCLMSGISGFALTMLCWMSYF) form a helical membrane-spanning segment. Residues 124–213 (LRRLVGILYL…QVFGVHQMLK (90 aa)) are Mitochondrial matrix-facing.

Belongs to the TMEM186 family. Part of the mitochondrial complex I assembly/MCIA complex that comprises at least the core subunits TMEM126B, NDUFAF1, ECSIT and ACAD9 and complement subunits such as COA1 and TMEM186. Interacts with MT-ND3.

It is found in the mitochondrion inner membrane. Its function is as follows. As part of the MCIA complex, required for efficient assembly of the mitochondrial complex I. This is Transmembrane protein 186 from Homo sapiens (Human).